Reading from the N-terminus, the 341-residue chain is Anthranilate phosphoribosyltransferase (341 aa).

5-phospho-alpha-D-ribose 1-diphosphate is bound by residues Gly-81, 84–85 (GD), Thr-89, 91–94 (NIST), 109–117 (KHGNRKASS), and Thr-121. Anthranilate is bound at residue Gly-81. Residue Ser-93 participates in Mg(2+) binding. Asn-112 is an anthranilate binding site. An anthranilate-binding site is contributed by Arg-167. Residues Asp-226 and Glu-227 each coordinate Mg(2+).

This sequence belongs to the anthranilate phosphoribosyltransferase family. Homodimer. Requires Mg(2+) as cofactor.

It catalyses the reaction N-(5-phospho-beta-D-ribosyl)anthranilate + diphosphate = 5-phospho-alpha-D-ribose 1-diphosphate + anthranilate. The protein operates within amino-acid biosynthesis; L-tryptophan biosynthesis; L-tryptophan from chorismate: step 2/5. Its function is as follows. Catalyzes the transfer of the phosphoribosyl group of 5-phosphorylribose-1-pyrophosphate (PRPP) to anthranilate to yield N-(5'-phosphoribosyl)-anthranilate (PRA). This chain is Anthranilate phosphoribosyltransferase, found in Parvibaculum lavamentivorans (strain DS-1 / DSM 13023 / NCIMB 13966).